The sequence spans 498 residues: Lysine--tRNA ligase (498 aa).

Glutamate 408 and glutamate 415 together coordinate Mg(2+).

The protein belongs to the class-II aminoacyl-tRNA synthetase family. In terms of assembly, homodimer. Requires Mg(2+) as cofactor.

Its subcellular location is the cytoplasm. It catalyses the reaction tRNA(Lys) + L-lysine + ATP = L-lysyl-tRNA(Lys) + AMP + diphosphate. In Listeria innocua serovar 6a (strain ATCC BAA-680 / CLIP 11262), this protein is Lysine--tRNA ligase.